Consider the following 964-residue polypeptide: Syndetin (964 aa).

Met-1 carries the post-translational modification N-acetylmethionine. Residues 1 to 25 (MQKIKSLMTRQGLKSPPESLNDLGA) form a disordered region. Phosphoserine is present on Ser-15. Coiled coils occupy residues 81-107 (LNLQELEEYRDKLKQQQAAVSKKVADL) and 216-244 (YSCISELNSKLQDTLEQIEEQLDVALSKI). Phosphoserine occurs at positions 494, 498, 559, and 561. The disordered stretch occupies residues 532–563 (DEETEDVLASNGYESDEQEKSAYQDYDSDSDV). Residue Lys-963 forms a Glycyl lysine isopeptide (Lys-Gly) (interchain with G-Cter in SUMO1); alternate linkage. A Glycyl lysine isopeptide (Lys-Gly) (interchain with G-Cter in SUMO2); alternate cross-link involves residue Lys-963.

It belongs to the syndetin family. In terms of assembly, component of the endosome-associated retrograde protein (EARP) complex, composed of VPS51, VPS52, VPS53 and VPS50/Syndetin. The EARP complex interacts with EIPR1. Interacts with VPS51 and VPS53 in an EIPR1-independent manner. Expressed in the brain (at protein level).

It localises to the recycling endosome. Its subcellular location is the membrane. Acts as a component of the EARP complex that is involved in endocytic recycling. The EARP complex associates with Rab4-positive endosomes and promotes recycling of internalized transferrin receptor (TFRC) to the plasma membrane. Within the EARP complex, required to tether the complex to recycling endosomes. Not involved in retrograde transport from early and late endosomes to the trans-Golgi network (TGN). The sequence is that of Syndetin from Rattus norvegicus (Rat).